The following is a 115-amino-acid chain: Large ribosomal subunit protein uL24 (115 aa).

Belongs to the universal ribosomal protein uL24 family. In terms of assembly, part of the 50S ribosomal subunit.

One of two assembly initiator proteins, it binds directly to the 5'-end of the 23S rRNA, where it nucleates assembly of the 50S subunit. In terms of biological role, one of the proteins that surrounds the polypeptide exit tunnel on the outside of the subunit. This Acaryochloris marina (strain MBIC 11017) protein is Large ribosomal subunit protein uL24.